The primary structure comprises 123 residues: Periplasmic [Fe] hydrogenase small subunit (123 aa).

The segment at residues 1–34 is a signal peptide (tat-type signal); the sequence is MQIASITRRGFLKVACVTTGAALIGIRMTGKAVA. The disordered stretch occupies residues 103 to 123; it reads TTAGKLPNPRASEFEGPYPYE.

As to quaternary structure, heterodimer of a large and a small subunit. In terms of processing, predicted to be exported by the Tat system. The position of the signal peptide cleavage has been experimentally proven.

Its subcellular location is the periplasm. It carries out the reaction H2 + 2 oxidized [2Fe-2S]-[ferredoxin] = 2 reduced [2Fe-2S]-[ferredoxin] + 2 H(+). Functionally, may be involved in hydrogen uptake for the reduction of sulfate to hydrogen sulfide in an electron transport chain. Cytochrome c3 is likely to be the physiological electron carrier for the enzyme. The protein is Periplasmic [Fe] hydrogenase small subunit (hydB) of Nitratidesulfovibrio vulgaris (strain ATCC 29579 / DSM 644 / CCUG 34227 / NCIMB 8303 / VKM B-1760 / Hildenborough) (Desulfovibrio vulgaris).